The following is a 538-amino-acid chain: Sodium/hydrogen exchanger 1 (538 aa).

Residues 1 to 19 (MLDSLVSKLPSLSTSDHAS) lie on the Cytoplasmic side of the membrane. The chain crosses the membrane as a helical span at residues 20–40 (VVALNLFVALLCACIVLGHLL). Over 41–45 (EENRW) the chain is Vacuolar. Residues 46–66 (MNESITALLIGLGTGVTILLI) traverse the membrane as a helical segment. Over 67–73 (SKGKSSH) the chain is Cytoplasmic. The helical intramembrane region spans 74–94 (LLVFSEDLFFIYLLPPIIFNA). Residues 95–106 (GFQVKKKQFFRN) are Cytoplasmic-facing. The chain crosses the membrane as a helical span at residues 107 to 127 (FVTIMLFGAVGTIISCTIISL). The Vacuolar segment spans residues 128-146 (GVTQFFKKLDIGTFDLGDY). 2 consecutive intramembrane regions (helical) follow at residues 147–166 (LAIG…QVLN) and 172–192 (LLYS…VVVF). Residues 193–216 (NAIQSFDLTHLNHEAAFHLLGNFL) are Vacuolar-facing. Residues 217 to 237 (YLFLLSTLLGAATGLISAYVI) form a helical membrane-spanning segment. At 238 to 262 (KKLYFGRHSTDREVALMMLMAYLSY) the chain is on the cytoplasmic side. Residues 263–283 (MLAELFDLSGILTVFFCGIVM) form a helical membrane-spanning segment. The Vacuolar segment spans residues 284-302 (SHYTWHNVTESSRITTKHT). The N-linked (GlcNAc...) asparagine glycan is linked to Asn290. A helical transmembrane segment spans residues 303 to 323 (FATLSFLAETFIFLYVGMDAL). Over 324–342 (DIDKWRSVSDTPGTSIAVS) the chain is Cytoplasmic. A helical membrane pass occupies residues 343 to 363 (SILMGLVMVGRAAFVFPLSFL). The Vacuolar segment spans residues 364-378 (SNLAKKNQSEKINFN). Asn370 carries N-linked (GlcNAc...) asparagine glycosylation. The helical transmembrane segment at 379-399 (MQVVIWWSGLMRGAVSMALAY) threads the bilayer. The Cytoplasmic segment spans residues 400 to 413 (NKFTRAGHTDVRGN). Residues 414–434 (AIMITSTITVCLFSTVVFGML) form a helical membrane-spanning segment. Residues 435–538 (TKPLISYLLP…ERNPPDLSKA (104 aa)) are Vacuolar-facing. Asn447 carries an N-linked (GlcNAc...) asparagine glycan. Residues 496–518 (RTVHYYWRQFDDSFMRPVFGGRG) form an interaction with CML18/CAM15 region.

It belongs to the monovalent cation:proton antiporter 1 (CPA1) transporter (TC 2.A.36) family. In terms of assembly, calcium and pH-dependent interaction with CML18/CAM15 (increases when pH decreases, better at pH 5.5 than at pH 7.5). As to expression, ubiquitous, with higher levels around vascular tissues and guard cells.

The protein resides in the vacuole membrane. It localises to the endoplasmic reticulum membrane. The protein localises to the golgi apparatus membrane. It catalyses the reaction Na(+)(in) + H(+)(out) = Na(+)(out) + H(+)(in). The enzyme catalyses K(+)(in) + H(+)(out) = K(+)(out) + H(+)(in). Acts in low affinity electroneutral exchange of protons for cations such as Na(+) or K(+) across membranes. Can also exchange Li(+) and Cs(+) with a lower affinity. Involved in vacuolar ion compartmentalization necessary for cell volume regulation and cytoplasmic Na(+) detoxification. Required during leaves expansion, probably to stimulate epidermal cell expansion. Confers competence to grow in high salinity conditions. The sequence is that of Sodium/hydrogen exchanger 1 (NHX1) from Arabidopsis thaliana (Mouse-ear cress).